Consider the following 956-residue polypeptide: MAM domain-containing glycosylphosphatidylinositol anchor protein 2 (956 aa).

The N-terminal stretch at 1-25 (MDLLYGLVWLLTVLLEGISGQGVYA) is a signal peptide. Ig-like domains are found at residues 27–127 (PTVR…IRVD) and 134–232 (PVVT…KMVS). 2 disulfides stabilise this stretch: cysteine 62-cysteine 110 and cysteine 159-cysteine 216. N-linked (GlcNAc...) asparagine glycosylation is found at asparagine 92, asparagine 213, and asparagine 237. 4 consecutive Ig-like domains span residues 242–328 (PSIK…NIIV), 340–436 (PDPY…VNIS), 442–533 (PNLT…ALVQ), and 540–627 (PAVE…FLVT). 2 disulfides stabilise this stretch: cysteine 264/cysteine 310 and cysteine 359/cysteine 417. N-linked (GlcNAc...) asparagine glycosylation is found at asparagine 434, asparagine 443, asparagine 504, asparagine 610, and asparagine 703. 2 disulfide bridges follow: cysteine 465–cysteine 515 and cysteine 561–cysteine 611. The Fibronectin type-III domain occupies 638 to 739 (DTYNPVWQNR…IRVIKYSAPV (102 aa)). The MAM domain occupies 746-921 (FHCGFEDGNI…VSIAEGECAK (176 aa)). Residue aspartate 931 is the site of GPI-anchor amidated aspartate attachment. Residues 932–956 (GAVGILVHIWLFPIIVLISILSPRR) constitute a propeptide, removed in mature form.

Interacts (through the Ig-like domains) with NLGN2. In terms of tissue distribution, detected in Leydig cells, syncytiotrophoblast, duodenal villi epithelial cells and neutrophils from kidney and cutaneous squamous cell carcinoma (at protein level).

The protein resides in the cell membrane. Functionally, may be involved in cell-cell interactions. This chain is MAM domain-containing glycosylphosphatidylinositol anchor protein 2 (MDGA2), found in Homo sapiens (Human).